The following is a 144-amino-acid chain: uncharacterized protein (144 aa).

The stretch at 48-119 forms a coiled coil; it reads ELNKLKAKAD…KETEEPKMEL (72 aa).

This is an uncharacterized protein from Archaeoglobus fulgidus (strain ATCC 49558 / DSM 4304 / JCM 9628 / NBRC 100126 / VC-16).